A 189-amino-acid polypeptide reads, in one-letter code: Large ribosomal subunit protein bL9 (189 aa).

Belongs to the bacterial ribosomal protein bL9 family.

Its function is as follows. Binds to the 23S rRNA. The protein is Large ribosomal subunit protein bL9 of Cereibacter sphaeroides (strain KD131 / KCTC 12085) (Rhodobacter sphaeroides).